The sequence spans 105 residues: Thioredoxin (105 aa).

Residues Met-1–Ile-105 enclose the Thioredoxin domain. Cys-29 and Cys-32 form a disulfide bridge.

This sequence belongs to the thioredoxin family.

Functionally, participates in various redox reactions through the reversible oxidation of its active center dithiol to a disulfide and catalyzes dithiol-disulfide exchange reactions. This is Thioredoxin (trxA) from Acetoanaerobium sticklandii (strain ATCC 12662 / DSM 519 / JCM 1433 / CCUG 9281 / NCIMB 10654 / HF) (Clostridium sticklandii).